A 176-amino-acid polypeptide reads, in one-letter code: Large ribosomal subunit protein eL20 (176 aa).

The protein belongs to the eukaryotic ribosomal protein eL20 family. As to quaternary structure, component of the large ribosomal subunit.

Its subcellular location is the cytoplasm. In terms of biological role, component of the large ribosomal subunit. The ribosome is a large ribonucleoprotein complex responsible for the synthesis of proteins in the cell. This Ictalurus punctatus (Channel catfish) protein is Large ribosomal subunit protein eL20 (rpl18a).